Consider the following 177-residue polypeptide: Large ribosomal subunit protein uL6 (177 aa).

This sequence belongs to the universal ribosomal protein uL6 family. In terms of assembly, part of the 50S ribosomal subunit.

This protein binds to the 23S rRNA, and is important in its secondary structure. It is located near the subunit interface in the base of the L7/L12 stalk, and near the tRNA binding site of the peptidyltransferase center. This is Large ribosomal subunit protein uL6 from Mesorhizobium japonicum (strain LMG 29417 / CECT 9101 / MAFF 303099) (Mesorhizobium loti (strain MAFF 303099)).